A 224-amino-acid chain; its full sequence is MSIRDWPASERPREKLLDQGAAALSDAELLAIFLRTGVAGKSAVDLARYLLAEFGSLRALLEADLDQFSAHLGLGPAKFAQLQAVLEMGRRHLAERLRRDSALESPQAVRDYLKARLRHEPHELFGCLFLDAKHRVLAFEVLFHGTIDGASVYPRQVVKRALAQNAAAVILTHNHPSGVAEPSQADRQLTQRLKDALALIDVRVLDHFIVGDGEPLSMAEYGWM.

The MPN domain occupies 102 to 224; it reads ALESPQAVRD…PLSMAEYGWM (123 aa). Positions 173, 175, and 186 each coordinate Zn(2+). The JAMM motif signature appears at 173–186; it reads HNHPSGVAEPSQAD.

This sequence belongs to the UPF0758 family.

This chain is UPF0758 protein PST_0473, found in Stutzerimonas stutzeri (strain A1501) (Pseudomonas stutzeri).